Consider the following 228-residue polypeptide: Ephrin-A5 (228 aa).

The N-terminal stretch at 1 to 20 (MLHVEMLTLLFLVLWMCVFS) is a signal peptide. Positions 29–162 (ADRYAVYWNS…KLKVFVRPTN (134 aa)) constitute an Ephrin RBD domain. N37 is a glycosylation site (N-linked (GlcNAc...) asparagine). Disulfide bonds link C62–C102 and C90–C151. Residues 186–205 (EPADDTVHESAEPSRGENAA) are disordered. The span at 190-200 (DTVHESAEPSR) shows a compositional bias: basic and acidic residues. N203 is lipidated: GPI-anchor amidated asparagine. A propeptide spans 204-228 (AAQTPRIPSRLLAILLFLLAMLLTL) (removed in mature form).

The protein belongs to the ephrin family. In terms of assembly, binds to the receptor tyrosine kinases EPHA2, EPHA3, EPHB1 and EPHB2. Interacts with EPHA8; activates EPHA8. Forms a ternary EFNA5-EPHA3-ADAM10 complex mediating EFNA5 extracellular domain shedding by ADAM10 which regulates the EFNA5-EPHA3 complex internalization and function. Expressed in brain, heart, placenta and lung.

Its subcellular location is the cell membrane. It localises to the membrane. The protein resides in the caveola. Its function is as follows. Cell surface GPI-bound ligand for Eph receptors, a family of receptor tyrosine kinases which are crucial for migration, repulsion and adhesion during neuronal, vascular and epithelial development. Binds promiscuously Eph receptors residing on adjacent cells, leading to contact-dependent bidirectional signaling into neighboring cells. The signaling pathway downstream of the receptor is referred to as forward signaling while the signaling pathway downstream of the ephrin ligand is referred to as reverse signaling. Induces compartmentalized signaling within a caveolae-like membrane microdomain when bound to the extracellular domain of its cognate receptor. This signaling event requires the activity of the Fyn tyrosine kinase. Activates the EPHA3 receptor to regulate cell-cell adhesion and cytoskeletal organization. With the receptor EPHA2 may regulate lens fiber cells shape and interactions and be important for lens transparency maintenance. May function actively to stimulate axon fasciculation. The interaction of EFNA5 with EPHA5 also mediates communication between pancreatic islet cells to regulate glucose-stimulated insulin secretion. Cognate/functional ligand for EPHA7, their interaction regulates brain development modulating cell-cell adhesion and repulsion. This is Ephrin-A5 (Efna5) from Rattus norvegicus (Rat).